Here is an 85-residue protein sequence, read N- to C-terminus: Protein Vpu (85 aa).

Residues 1 to 7 (MHQENLL) lie on the Extracellular side of the membrane. The chain crosses the membrane as a helical span at residues 8-28 (ALIALSALCLINVLIWLFNLR). Residues 29-85 (IYLVQRKQDRREQEILERLRRIKEIRDDSDYESNEEEQQEVMELIHSHGFANPMFEL) lie on the Cytoplasmic side of the membrane.

It belongs to the HIV-1 VPU protein family. Homopentamer. Interacts with host CD4 and BRTC; these interactions induce proteasomal degradation of CD4. Interacts with host BST2; this interaction leads to the degradation of host BST2. Interacts with host FBXW11. Interacts with host AP1M1; this interaction plays a role in the mistrafficking and subsequent degradation of host BST2. Interacts with host RANBP2; this interaction allows Vpu to down-regulate host BLM sumoylation. Post-translationally, phosphorylated by host CK2. This phosphorylation is necessary for interaction with human BTRC and degradation of CD4.

The protein localises to the host membrane. Its activity is regulated as follows. Ion channel activity is inhibited by hexamethylene amiloride in vitro. Enhances virion budding by targeting host CD4 and Tetherin/BST2 to proteasome degradation. Degradation of CD4 prevents any unwanted premature interactions between viral Env and its host receptor CD4 in the endoplasmic reticulum. Degradation of antiretroviral protein Tetherin/BST2 is important for virion budding, as BST2 tethers new viral particles to the host cell membrane. Mechanistically, Vpu bridges either CD4 or BST2 to BTRC, a substrate recognition subunit of the Skp1/Cullin/F-box protein E3 ubiquitin ligase, induces their ubiquitination and subsequent proteasomal degradation. The alteration of the E3 ligase specificity by Vpu seems to promote the degradation of host IKBKB, leading to NF-kappa-B down-regulation and subsequent apoptosis. Acts as a viroporin that forms an oligomeric ion channel in membranes. Modulates the host DNA repair mechanisms to promote degradation of nuclear viral cDNA in cells that are already productively infected in order to suppress immune sensing and proviral hyper-integration (superinfection). Manipulates PML-NBs and modulates SUMOylation of host BLM protein thereby enhancing its DNA-end processing activity toward viral unintegrated linear DNA. Also inhibits RAD52-mediated homologous repair of viral cDNA, preventing the generation of dead-end circular forms of single copies of the long terminal repeat and permitting sustained nucleolytic attack. The sequence is that of Protein Vpu from Human immunodeficiency virus type 1 group O (isolate MVP5180) (HIV-1).